The sequence spans 796 residues: Polyribonucleotide nucleotidyltransferase (796 aa).

Mg(2+) is bound by residues Asp490 and Asp496. The KH domain occupies 557–616 (PRIESIFINKDKIRNVIGSGGKNIRDICEKTGAKIEIIQDGTVMIYAVNNEAVEYAKSMI). Residues 626–693 (GKVFEGTVVE…DREHVQLSMR (68 aa)) form the S1 motif domain. A compositionally biased stretch (low complexity) spans 714-736 (SFSDDSSSSGTSSSGSSFKESYS). Residues 714 to 796 (SFSDDSSSSG…HEVPRKPRFF (83 aa)) are disordered. The span at 740–755 (HGSHEKRRSGGSRSSR) shows a compositional bias: basic residues. The segment covering 771 to 784 (SDFGNNNRSFSNSR) has biased composition (low complexity). Residues 785-796 (NGHEVPRKPRFF) show a composition bias toward basic and acidic residues.

Belongs to the polyribonucleotide nucleotidyltransferase family. Mg(2+) serves as cofactor.

It localises to the cytoplasm. The enzyme catalyses RNA(n+1) + phosphate = RNA(n) + a ribonucleoside 5'-diphosphate. Involved in mRNA degradation. Catalyzes the phosphorolysis of single-stranded polyribonucleotides processively in the 3'- to 5'-direction. The sequence is that of Polyribonucleotide nucleotidyltransferase from Ehrlichia canis (strain Jake).